Here is a 460-residue protein sequence, read N- to C-terminus: Tyrosine phenol-lyase (460 aa).

Lysine 260 carries the N6-(pyridoxal phosphate)lysine modification.

The protein belongs to the beta-eliminating lyase family. As to quaternary structure, homotetramer. The cofactor is pyridoxal 5'-phosphate.

The catalysed reaction is L-tyrosine + H2O = phenol + pyruvate + NH4(+). The protein is Tyrosine phenol-lyase of Clostridium tetani (strain Massachusetts / E88).